We begin with the raw amino-acid sequence, 460 residues long: Elongation factor 1-alpha (460 aa).

Gly2 is subject to N,N,N-trimethylglycine. An N6,N6-dimethyllysine; alternate modification is found at Lys3. Position 3 is an N6-methyllysine; alternate (Lys3). A tr-type G domain is found at 5-240 (KLHVNVVVIG…DAIEPPVRPS (236 aa)). The G1 stretch occupies residues 14 to 21 (GHVDSGKS). 14-21 (GHVDSGKS) lines the GTP pocket. N6-methyllysine is present on Lys30. Residues 70–74 (GITID) form a G2 region. N6,N6,N6-trimethyllysine is present on Lys79. Positions 91-94 (DAPG) are G3. Residues 91 to 95 (DAPGH) and 153 to 156 (NKMD) each bind GTP. Positions 153–156 (NKMD) are G4. A G5 region spans residues 192-194 (SGW). Position 316 is an N6,N6-dimethyllysine; alternate (Lys316). Lys316 bears the N6-methyllysine; alternate mark. Lys390 carries the post-translational modification N6-methyllysine.

Belongs to the TRAFAC class translation factor GTPase superfamily. Classic translation factor GTPase family. EF-Tu/EF-1A subfamily.

The protein localises to the cytoplasm. In terms of biological role, this protein promotes the GTP-dependent binding of aminoacyl-tRNA to the A-site of ribosomes during protein biosynthesis. This chain is Elongation factor 1-alpha (TEF1), found in Schizophyllum commune (Split gill fungus).